Consider the following 90-residue polypeptide: Large ribosomal subunit protein bL27 (90 aa).

The interval 1 to 22 (MAHKKAGGSTRNGRDSNPKMLG) is disordered.

The protein belongs to the bacterial ribosomal protein bL27 family.

This Coxiella burnetii (strain Dugway 5J108-111) protein is Large ribosomal subunit protein bL27.